Here is a 399-residue protein sequence, read N- to C-terminus: Acetate kinase (399 aa).

Asparagine 7 contacts Mg(2+). Residue lysine 14 participates in ATP binding. Arginine 90 provides a ligand contact to substrate. Aspartate 147 (proton donor/acceptor) is an active-site residue. ATP contacts are provided by residues 207–211 (HLGNG), 282–284 (DFR), and 330–334 (GIGEN). A Mg(2+)-binding site is contributed by glutamate 385.

It belongs to the acetokinase family. As to quaternary structure, homodimer. It depends on Mg(2+) as a cofactor. The cofactor is Mn(2+).

It is found in the cytoplasm. The enzyme catalyses acetate + ATP = acetyl phosphate + ADP. Its pathway is metabolic intermediate biosynthesis; acetyl-CoA biosynthesis; acetyl-CoA from acetate: step 1/2. Functionally, catalyzes the formation of acetyl phosphate from acetate and ATP. Can also catalyze the reverse reaction. The sequence is that of Acetate kinase from Caldicellulosiruptor saccharolyticus (strain ATCC 43494 / DSM 8903 / Tp8T 6331).